Consider the following 1135-residue polypeptide: uncharacterized protein (1135 aa).

An N-terminal signal peptide occupies residues 1–28 (MALFPRGILIALVLSFVLNLGLVTKIHA). The next 7 membrane-spanning stretches (helical) occupy residues 332–352 (IVTA…LLAG), 359–379 (EYIN…GINI), 393–413 (MIQW…NWVM), 495–515 (MLVS…AFMV), 522–542 (MISI…FLFA), 555–575 (MISF…MFAV), and 700–720 (IKNI…MYNF).

The protein belongs to the TrbL/VirB6 family.

It localises to the cell membrane. This is an uncharacterized protein from Rickettsia typhi (strain ATCC VR-144 / Wilmington).